A 120-amino-acid chain; its full sequence is uncharacterized protein (120 aa).

Residues 70 to 109 (CARCRRSLTLTPAVSCLPCGHSCLCTDCDQLFANVCFECK) form an RING-type zinc finger.

This is an uncharacterized protein from Orgyia pseudotsugata multicapsid polyhedrosis virus (OpMNPV).